Consider the following 182-residue polypeptide: CDP-diacylglycerol--glycerol-3-phosphate 3-phosphatidyltransferase (182 aa).

Topologically, residues 1 to 12 are cytoplasmic; the sequence is MRLNIPTCLTLF. Residues 13 to 37 form a helical membrane-spanning segment; it reads RLIIVPFFIIVFYLPFSNASFYSAI. Residues 38–60 are Periplasmic-facing; that stretch reads IFILAALTDWFDGFLARKLNQTT. The helical transmembrane segment at 61-81 threads the bilayer; that stretch reads CFGAFLDPVADKIIVVIGLIL. At 82–86 the chain is on the cytoplasmic side; it reads IIEYF. Residues 87-107 form a helical membrane-spanning segment; sequence HSFWITIPSLIMIIREIIISS. Residues 108-145 are Periplasmic-facing; that stretch reads LREWMAEIGKNNLLSVSLISKLKTSIQMLAIFSLLWKE. The chain crosses the membrane as a helical span at residues 146–168; it reads TYIIIIIGILSLYVSSILAFLSM. The Cytoplasmic portion of the chain corresponds to 169–181; it reads LKYFYIAWRDLFR.

The protein belongs to the CDP-alcohol phosphatidyltransferase class-I family.

It is found in the cell inner membrane. It carries out the reaction a CDP-1,2-diacyl-sn-glycerol + sn-glycerol 3-phosphate = a 1,2-diacyl-sn-glycero-3-phospho-(1'-sn-glycero-3'-phosphate) + CMP + H(+). It functions in the pathway phospholipid metabolism; phosphatidylglycerol biosynthesis; phosphatidylglycerol from CDP-diacylglycerol: step 1/2. Functionally, catalyzes the conversion of cytidine diphosphate diacylglycerol (CDP-DG) and glycerol 3-phosphate into phosphatidylglycerol. Essential for the synthesis of anionic phospholipids, thereby playing a role in balancing the ratio of zwitterionic and anionic phospholipids, which is thought to be important for normal membrane function. This chain is CDP-diacylglycerol--glycerol-3-phosphate 3-phosphatidyltransferase, found in Wigglesworthia glossinidia brevipalpis.